The primary structure comprises 110 residues: Flagellar hook-basal body complex protein FliE (110 aa).

It belongs to the FliE family.

It localises to the bacterial flagellum basal body. This is Flagellar hook-basal body complex protein FliE from Pseudomonas putida (strain GB-1).